A 431-amino-acid chain; its full sequence is Serine/threonine-protein kinase Sgk1 (431 aa).

A necessary for localization to the mitochondria region spans residues 1–60; sequence MTVKTEAAKGTLTYSRMRGMVAILIAFMKQRRMGLNDFIQKIANNSYACKHPEVQSILKI. The segment at 66–92 is disordered; that stretch reads PELMNANPSPPPSPSQQINLGPSSNPH. Phosphoserine is present on Ser74. A Phosphoserine; by MAPK7 modification is found at Ser78. The segment covering 81–91 has biased composition (polar residues); the sequence is QQINLGPSSNP. In terms of domain architecture, Protein kinase spans 98–355; that stretch reads FHFLKVIGKG…FMEIKSHVFF (258 aa). Residues 104 to 112 and Lys127 each bind ATP; that span reads IGKGSFGKV. The short motif at 131-141 is the Nuclear localization signal element; that stretch reads KKAILKKKEEK. Residue Asp222 is the Proton acceptor of the active site. Thr256 is modified (phosphothreonine; by PDPK1). The AGC-kinase C-terminal domain maps to 356-431; that stretch reads SLINWDDLIN…SYAPPTDSFL (76 aa). Thr369 carries the post-translational modification Phosphothreonine; by PKA. 3 positions are modified to phosphoserine: Ser397, Ser401, and Ser422.

It belongs to the protein kinase superfamily. AGC Ser/Thr protein kinase family. As to quaternary structure, homodimer; disulfide-linked. Forms a trimeric complex with FBXW7 and NOTCH1. Interacts with MAPK3/ERK1, MAPK1/ERK2, MAP2K1/MEK1, MAP2K2/MEK2, NEDD4, NEDD4L, MAPT/TAU, MAPK7, CREB1, SLC9A3R2/NHERF2 and KCNJ1/ROMK1. Associates with the mammalian target of rapamycin complex 2 (mTORC2) via an interaction with MAPKAP1/SIN1. Post-translationally, regulated by phosphorylation. Activated by phosphorylation on Ser-422 by mTORC2, transforming it into a substrate for PDPK1 which phosphorylates it on Thr-256. Phosphorylation on Ser-397 and Ser-401 are also essential for its activity. Phosphorylation on Ser-78 by MAPK7 is required for growth factor-induced cell cycle progression. Ubiquitinated by NEDD4L; which promotes proteasomal degradation. Ubiquitinated by SYVN1 at the endoplasmic reticulum; which promotes rapid proteasomal degradation and maintains a high turnover rate in resting cells. Isoform 2 shows enhanced stability. As to expression, expressed in most tissues with highest levels in the pancreas, followed by placenta, kidney and lung. Isoform 2 is strongly expressed in brain and pancreas, weaker in heart, placenta, lung, liver and skeletal muscle.

The protein resides in the cytoplasm. It localises to the nucleus. The protein localises to the endoplasmic reticulum membrane. It is found in the cell membrane. Its subcellular location is the mitochondrion. The enzyme catalyses L-seryl-[protein] + ATP = O-phospho-L-seryl-[protein] + ADP + H(+). It carries out the reaction L-threonyl-[protein] + ATP = O-phospho-L-threonyl-[protein] + ADP + H(+). With respect to regulation, two specific sites, one in the kinase domain (Thr-256) and the other in the C-terminal regulatory region (Ser-422), need to be phosphorylated for its full activation. Phosphorylation at Ser-397 and Ser-401 are also essential for its activity. Activated by WNK1, WNK2, WNK3 and WNK4; which promote phosphorylation by mTORC2. In terms of biological role, serine/threonine-protein kinase which is involved in the regulation of a wide variety of ion channels, membrane transporters, cellular enzymes, transcription factors, neuronal excitability, cell growth, proliferation, survival, migration and apoptosis. Plays an important role in cellular stress response. Contributes to regulation of renal Na(+) retention, renal K(+) elimination, salt appetite, gastric acid secretion, intestinal Na(+)/H(+) exchange and nutrient transport, insulin-dependent salt sensitivity of blood pressure, salt sensitivity of peripheral glucose uptake, cardiac repolarization and memory consolidation. Up-regulates Na(+) channels: SCNN1A/ENAC, SCN5A and ASIC1/ACCN2, K(+) channels: KCNJ1/ROMK1, KCNA1-5, KCNQ1-5 and KCNE1, epithelial Ca(2+) channels: TRPV5 and TRPV6, chloride channels: BSND, CLCN2 and CFTR, glutamate transporters: SLC1A3/EAAT1, SLC1A2 /EAAT2, SLC1A1/EAAT3, SLC1A6/EAAT4 and SLC1A7/EAAT5, amino acid transporters: SLC1A5/ASCT2, SLC38A1/SN1 and SLC6A19, creatine transporter: SLC6A8, Na(+)/dicarboxylate cotransporter: SLC13A2/NADC1, Na(+)-dependent phosphate cotransporter: SLC34A2/NAPI-2B, glutamate receptor: GRIK2/GLUR6. Up-regulates carriers: SLC9A3/NHE3, SLC12A1/NKCC2, SLC12A3/NCC, SLC5A3/SMIT, SLC2A1/GLUT1, SLC5A1/SGLT1 and SLC15A2/PEPT2. Regulates enzymes: GSK3A/B, PMM2 and Na(+)/K(+) ATPase, and transcription factors: CTNNB1 and nuclear factor NF-kappa-B. Stimulates sodium transport into epithelial cells by enhancing the stability and expression of SCNN1A/ENAC. This is achieved by phosphorylating the NEDD4L ubiquitin E3 ligase, promoting its interaction with 14-3-3 proteins, thereby preventing it from binding to SCNN1A/ENAC and targeting it for degradation. Regulates store-operated Ca(+2) entry (SOCE) by stimulating ORAI1 and STIM1. Regulates KCNJ1/ROMK1 directly via its phosphorylation or indirectly via increased interaction with SLC9A3R2/NHERF2. Phosphorylates MDM2 and activates MDM2-dependent ubiquitination of p53/TP53. Phosphorylates MAPT/TAU and mediates microtubule depolymerization and neurite formation in hippocampal neurons. Phosphorylates SLC2A4/GLUT4 and up-regulates its activity. Phosphorylates APBB1/FE65 and promotes its localization to the nucleus. Phosphorylates MAPK1/ERK2 and activates it by enhancing its interaction with MAP2K1/MEK1 and MAP2K2/MEK2. Phosphorylates FBXW7 and plays an inhibitory role in the NOTCH1 signaling. Phosphorylates FOXO1 resulting in its relocalization from the nucleus to the cytoplasm. Phosphorylates FOXO3, promoting its exit from the nucleus and interference with FOXO3-dependent transcription. Phosphorylates BRAF and MAP3K3/MEKK3 and inhibits their activity. Phosphorylates SLC9A3/NHE3 in response to dexamethasone, resulting in its activation and increased localization at the cell membrane. Phosphorylates CREB1. Necessary for vascular remodeling during angiogenesis. Sustained high levels and activity may contribute to conditions such as hypertension and diabetic nephropathy. Isoform 2 exhibited a greater effect on cell plasma membrane expression of SCNN1A/ENAC and Na(+) transport than isoform 1. This chain is Serine/threonine-protein kinase Sgk1 (SGK1), found in Homo sapiens (Human).